The chain runs to 101 residues: Small ribosomal subunit protein uS14 (101 aa).

The tract at residues 44–74 (ASRKLSRLPRDSSPVRLRNRDQVDGRPRGYV) is disordered. The segment covering 61 to 70 (RNRDQVDGRP) has biased composition (basic and acidic residues).

Belongs to the universal ribosomal protein uS14 family. In terms of assembly, part of the 30S ribosomal subunit. Contacts proteins S3 and S10.

In terms of biological role, binds 16S rRNA, required for the assembly of 30S particles and may also be responsible for determining the conformation of the 16S rRNA at the A site. The sequence is that of Small ribosomal subunit protein uS14 from Cutibacterium acnes (strain DSM 16379 / KPA171202) (Propionibacterium acnes).